A 2535-amino-acid chain; its full sequence is Piezo-type mechanosensitive ion channel component 1 (2535 aa).

A run of 3 helical transmembrane segments spans residues Leu-13–Leu-25, Ala-29–Leu-44, and Leu-59–Leu-81. The N-linked (GlcNAc...) asparagine glycan is linked to Asn-100. 5 helical membrane-spanning segments follow: residues Val-122–Leu-138, Leu-193–Ala-212, Ser-215–Cys-234, Leu-246–Thr-266, and Trp-308–Leu-328. Positions Asp-346–Glu-357 are enriched in acidic residues. The tract at residues Asp-346–Asp-377 is disordered. Over residues Pro-358–Pro-376 the composition is skewed to low complexity. N-linked (GlcNAc...) asparagine glycosylation occurs at Asn-380. Helical transmembrane passes span Leu-416 to Tyr-436, Trp-439 to Val-454, Leu-460 to Trp-482, Cys-510 to Leu-527, Ile-572 to Gly-592, Leu-594 to Val-614, Val-625 to Phe-646, and Leu-677 to Leu-693. Ser-749 is modified (phosphoserine). The next 12 helical transmembrane spans lie at Leu-803–Lys-814, Val-818–Leu-831, Val-846–Leu-860, Gly-913–Arg-940, Gly-981–Arg-996, Phe-999–Arg-1014, Cys-1028–Leu-1043, Thr-1083–Ala-1104, Tyr-1140–Thr-1166, Gly-1172–Leu-1190, Leu-1204–Ser-1222, and Ile-1272–Phe-1288. Residues His-1325–Ser-1356 are a coiled coil. Disordered regions lie at residues Ala-1345–Trp-1383 and Ser-1556–Ser-1597. Positions Gln-1352–Pro-1365 are enriched in polar residues. Phosphoserine occurs at positions 1372 and 1377. The segment covering Ser-1579–Ser-1597 has biased composition (polar residues). Ser-1614, Ser-1618, and Ser-1633 each carry phosphoserine. Helical transmembrane passes span Pro-1644–Met-1687, Ala-1692–Leu-1707, Phe-1716–Phe-1734, and Asp-1767–Leu-1788. 2 stretches are compositionally biased toward basic and acidic residues: residues Pro-1801–Asp-1811 and Pro-1842–Pro-1867. The tract at residues Pro-1801–Leu-1911 is disordered. Residues Gln-1868–Lys-1881 show a composition bias toward basic residues. The next 5 membrane-spanning stretches (helical) occupy residues Tyr-1965 to Trp-1984, Pro-2005 to Ile-2021, Ala-2036 to Val-2056, Ala-2065 to Leu-2080, and Gly-2181 to Ile-2201. Cys-2425 and Cys-2429 are joined by a disulfide. Residues Leu-2446–Gly-2466 traverse the membrane as a helical segment.

The protein belongs to the PIEZO (TC 1.A.75) family. As to quaternary structure, homotrimer; the homotrimer forms a propeller-shaped Piezo channel with a cation-ion conducting pore. Heterotrimeric interaction may occur between PIEZO1 and PIEZO2. Interacts with PKD2. Interacts with STOM13. Interacts with TMC1, TMC2, PCDH15 and CIB2; the interaction may be part of the MET complex. Interacts with MDFIC (via C-terminus); the interaction prolongs Piezo channel inactivation. Interacts with MDFI (via C-terminus); the interaction prolongs Piezo channel inactivation. As to expression, moderate expression in lung and kidney. Very weak expression in heart, spleen and liver.

Its subcellular location is the endoplasmic reticulum membrane. The protein localises to the endoplasmic reticulum-Golgi intermediate compartment membrane. The protein resides in the cell membrane. It localises to the cell projection. It is found in the lamellipodium membrane. The enzyme catalyses K(+)(in) = K(+)(out). It carries out the reaction Na(+)(in) = Na(+)(out). It catalyses the reaction Ca(2+)(in) = Ca(2+)(out). The catalysed reaction is Mg(2+)(in) = Mg(2+)(out). Its activity is regulated as follows. Regulated by auxillary subunits MDFIC and MDFI. Down-regulated by phosphatidylserines exposed on the cell surface. Divalent ions decrease the single-channel permeability of K(+). In terms of biological role, pore-forming subunit of the mechanosensitive non-specific cation Piezo channel required for rapidly adapting mechanically activated (MA) currents and has a key role in sensing touch and tactile pain. Piezo channels are homotrimeric three-blade propeller-shaped structures that utilize a cap-motion and plug-and-latch mechanism to gate their ion-conducting pathways. Generates currents characterized by a linear current-voltage relationship that are sensitive to ruthenium red and gadolinium. Conductance to monovalent alkali ions is highest for K(+), intermediate for Na(+) and lowest for Li(+). Divalent ions except for Mn(2+) permeate the channel but more slowly than the monovalent ions and they also reduce K(+) currents. Plays a key role in epithelial cell adhesion by maintaining integrin activation through R-Ras recruitment to the ER, most probably in its activated state, and subsequent stimulation of calpain signaling. In inner ear hair cells, PIEZO1/2 subunits may constitute part of the mechanotransducer (MET) non-selective cation channel complex where they may act as pore-forming ion-conducting component in the complex. In the kidney, may contribute to the detection of intraluminal pressure changes and to urine flow sensing. Acts as a shear-stress sensor that promotes endothelial cell organization and alignment in the direction of blood flow through calpain activation. Plays a key role in blood vessel formation and vascular structure in both development and adult physiology. Acts as a sensor of phosphatidylserine (PS) flipping at the plasma membrane and governs morphogenesis of muscle cells. In myoblasts, flippase-mediated PS enrichment at the inner leaflet of plasma membrane triggers channel activation and Ca(2+) influx followed by Rho GTPases signal transduction, leading to assembly of cortical actomyosin fibers and myotube formation. The sequence is that of Piezo-type mechanosensitive ion channel component 1 (Piezo1) from Rattus norvegicus (Rat).